Here is a 428-residue protein sequence, read N- to C-terminus: Ectoine/5-hydroxyectoine TRAP transporter large permease protein UehC (428 aa).

Helical transmembrane passes span 9–29 (MIVLLLLGFPMMIPLIAGAFI), 49–69 (LAGIRPASLIAVPMFIFAADI), 99–119 (AAACTMFGAVSGSTQATVVAI), 139–159 (ALIVNASDIAFLIPPSIGMII), 172–192 (FIAGIGPGLLILVLFSAYAYI), 217–237 (ALWPMGFPVIIIGGIYGGVFS), 242–262 (AAACVLYALVLEVLVFRSMSL), 273–293 (GLITAIVFILVGAGAAFSWVI), 302–322 (ILGAIGIAEMGPIGVLFVISI), 324–344 (FFIGCMFVDPIVVILVLVPVF), 366–386 (VAIGSATPPFGCDIFTAIAVF), and 400–420 (FILMLLGVSVALIFFPQIALF).

The protein belongs to the TRAP transporter large permease family. The complex comprises the extracytoplasmic solute receptor protein UehA, and the two transmembrane proteins UehB and UehC.

Its subcellular location is the cell inner membrane. Part of the tripartite ATP-independent periplasmic (TRAP) transport system UehABC, which imports both ectoine and 5-hydroxyectoine as nutrients, and not as osmoprotectants. The sequence is that of Ectoine/5-hydroxyectoine TRAP transporter large permease protein UehC from Ruegeria pomeroyi (strain ATCC 700808 / DSM 15171 / DSS-3) (Silicibacter pomeroyi).